Reading from the N-terminus, the 202-residue chain is Syndecan-4 (202 aa).

Residues 1–22 (MASPRLLALLLLLVGAFNAAAA) form the signal peptide. Topologically, residues 23–152 (ESIRETEVIN…NIFERTEVLS (130 aa)) are extracellular. Disordered regions lie at residues 41-75 (YFSGDLPDDEDVGGPGQEPDDFEWSGSGDLEGPED) and 87-112 (VPLDNHIPERTGPGGRVPTEPKELEE). O-linked (Xyl...) (glycosaminoglycan) serine glycosylation occurs at S43. Acidic residues predominate over residues 46-63 (LPDDEDVGGPGQEPDDFE). Residues S65 and S67 are each glycosylated (O-linked (Xyl...) (glycosaminoglycan) serine). Residues 153 to 173 (ALIVGGIVGILFAVFLVLLLV) traverse the membrane as a helical segment. The Cytoplasmic portion of the chain corresponds to 174–202 (YRMKKKDEGSYDLGKKPIYKKAPTNEFYA).

Belongs to the syndecan proteoglycan family. Homodimer. Interacts with CDCP1 and SDCBP. Interacts (via its cytoplasmic domain) with GIPC (via its PDZ domain). Interacts (via its cytoplasmic domain) with NUDT16L1. Interacts with DNM2; this interaction is markedly enhanced at focal ahesion site upon induction of focal adhesions and stress-fiber formation. Post-translationally, shedding, cleavage of the extracellular domain to release a soluble form, is enhanced by a number of factors such as heparanase, growth factor receptor action for example by thrombin or EGF. Physiological events such as stress or wound healing can activate the shedding. PMA-mediated shedding is inhibited by TIMP3. In terms of processing, O-glycosylated; contains both chondroitin sulfate and heparan sulfate. Ser-43, Ser-65 and Ser-67 can all be modified by either chondroitin sulfate or heparan sulfate, and the protein exists in forms that contain only chondroitin sulfate, only heparan sulfate and both chondroitin sulfate and heparan sulfate.

It localises to the membrane. Its subcellular location is the secreted. Cell surface proteoglycan which regulates exosome biogenesis in concert with SDCBP and PDCD6IP. This chain is Syndecan-4, found in Sus scrofa (Pig).